Consider the following 257-residue polypeptide: Type III pantothenate kinase (257 aa).

5 to 12 (DIGNTNIK) lines the ATP pocket. 107-110 (GSDR) contacts substrate. The active-site Proton acceptor is Asp109. Thr133 serves as a coordination point for ATP.

It belongs to the type III pantothenate kinase family. As to quaternary structure, homodimer. NH4(+) is required as a cofactor. K(+) serves as cofactor.

It is found in the cytoplasm. The catalysed reaction is (R)-pantothenate + ATP = (R)-4'-phosphopantothenate + ADP + H(+). The protein operates within cofactor biosynthesis; coenzyme A biosynthesis; CoA from (R)-pantothenate: step 1/5. Functionally, catalyzes the phosphorylation of pantothenate (Pan), the first step in CoA biosynthesis. The chain is Type III pantothenate kinase from Ehrlichia ruminantium (strain Welgevonden).